A 622-amino-acid polypeptide reads, in one-letter code: WD repeat-containing protein 70 (622 aa).

Positions 36-55 (RTAVERSKQTLEAREKEEQL) are enriched in basic and acidic residues. A disordered region spans residues 36–141 (RTAVERSKQT…DNPVKDIPDS (106 aa)). The span at 67 to 84 (SSSGQKKTKASGSSSGSE) shows a compositional bias: low complexity. Positions 120 to 132 (SDDEDDEEHEDDD) are enriched in acidic residues. WD repeat units follow at residues 148-187 (HGTK…ASLQ), 195-236 (CECH…ECVK), 249-289 (GHTA…KHKG), 298-337 (GKPV…HTKF), 344-383 (TPGT…NPLN), 387-434 (GLEN…KIYE), and 437-476 (VTEA…QRGA). The segment covering 508–533 (REPRQRSTRKQLEKDRLDPVKSHKPE) has biased composition (basic and acidic residues). 2 disordered regions span residues 508–549 (REPR…GTHG) and 602–622 (AEVD…KRKI). Gly residues predominate over residues 539 to 549 (PGRGGRVGTHG). Over residues 604-614 (VDSDEEEPDNE) the composition is skewed to acidic residues.

Belongs to the WD repeat GAD-1 family.

The protein is WD repeat-containing protein 70 (wdr70) of Xenopus laevis (African clawed frog).